A 475-amino-acid chain; its full sequence is 3-isopropylmalate dehydratase large subunit (475 aa).

Cysteine 353, cysteine 414, and cysteine 417 together coordinate [4Fe-4S] cluster.

This sequence belongs to the aconitase/IPM isomerase family. LeuC type 1 subfamily. As to quaternary structure, heterodimer of LeuC and LeuD. It depends on [4Fe-4S] cluster as a cofactor.

The enzyme catalyses (2R,3S)-3-isopropylmalate = (2S)-2-isopropylmalate. It participates in amino-acid biosynthesis; L-leucine biosynthesis; L-leucine from 3-methyl-2-oxobutanoate: step 2/4. Its function is as follows. Catalyzes the isomerization between 2-isopropylmalate and 3-isopropylmalate, via the formation of 2-isopropylmaleate. This chain is 3-isopropylmalate dehydratase large subunit, found in Ectopseudomonas mendocina (strain ymp) (Pseudomonas mendocina).